We begin with the raw amino-acid sequence, 418 residues long: UDP-N-acetylglucosamine 1-carboxyvinyltransferase (418 aa).

23–24 (KN) is a binding site for phosphoenolpyruvate. R93 contributes to the UDP-N-acetyl-alpha-D-glucosamine binding site. D117 acts as the Proton donor in catalysis. UDP-N-acetyl-alpha-D-glucosamine is bound by residues D305 and I327.

It belongs to the EPSP synthase family. MurA subfamily.

Its subcellular location is the cytoplasm. It carries out the reaction phosphoenolpyruvate + UDP-N-acetyl-alpha-D-glucosamine = UDP-N-acetyl-3-O-(1-carboxyvinyl)-alpha-D-glucosamine + phosphate. It functions in the pathway cell wall biogenesis; peptidoglycan biosynthesis. Its function is as follows. Cell wall formation. Adds enolpyruvyl to UDP-N-acetylglucosamine. The sequence is that of UDP-N-acetylglucosamine 1-carboxyvinyltransferase from Corynebacterium jeikeium (strain K411).